A 795-amino-acid chain; its full sequence is ATP-dependent RNA helicase DHX15 (795 aa).

Residues Met-1–Leu-111 are disordered. Residue Ser-15 is modified to Phosphoserine. Basic and acidic residues predominate over residues Ala-20 to Arg-62. The segment covering Ala-79–Ser-110 has biased composition (low complexity). In terms of domain architecture, Helicase ATP-binding spans Thr-147–Pro-313. Position 160–167 (Gly-160–Thr-167) interacts with ATP. A DEAH box motif is present at residues Asp-260–His-263. The region spanning Thr-338–Gly-518 is the Helicase C-terminal domain. An N6-acetyllysine modification is found at Lys-488. Residue Lys-786 forms a Glycyl lysine isopeptide (Lys-Gly) (interchain with G-Cter in SUMO2) linkage.

This sequence belongs to the DEAD box helicase family. DEAH subfamily. DDX15/PRP43 sub-subfamily. As to quaternary structure, component of the U11/U12 snRNPs that are part of the U12-type spliceosome. Identified in the Intron Large spliceosome complex (IL, also named intron lariat spliceosome), a post-mRNA release spliceosomal complex containing the excised intron, U2, U5 and U6 snRNPs, and splicing factors; the association may be transient. The IL complex exists in two distinct conformations, one with the DHX15 (ILS2) and one without (ILS1). Interacts with TFIP11 (via G-patch domain); indicative for a recruitment to the IL complex. Interacts with SSB/La. Interacts with GPATCH2 (via G-patch domain); promoting the RNA helicase activity. Interacts with NKRF (via G-patch domain); promoting the RNA helicase activity. Interacts with NLRP6. Ubiquitous.

It is found in the nucleus. The protein localises to the nucleolus. The catalysed reaction is ATP + H2O = ADP + phosphate + H(+). With respect to regulation, ATPase activity is enhanced upon binding to G-patch domain-containing proteins. G-patch domain-containing proteins act like a brace that tethers mobile sections of DHX15 together, stabilizing a functional conformation with high RNA affinity, thereby promoting the ATPase activity. Functionally, RNA helicase involved in mRNA processing and antiviral innate immunity. Pre-mRNA processing factor involved in disassembly of spliceosomes after the release of mature mRNA. In cooperation with TFIP11 seem to be involved in the transition of the U2, U5 and U6 snRNP-containing IL complex to the snRNP-free IS complex leading to efficient debranching and turnover of excised introns. Plays a key role in antiviral innate immunity by promoting both MAVS-dependent signaling and NLRP6 inflammasome. Acts as an RNA virus sensor: recognizes and binds viral double stranded RNA (dsRNA) and activates the MAVS-dependent signaling to produce interferon-beta and interferon lambda-3 (IFNL3). Involved in intestinal antiviral innate immunity together with NLRP6: recognizes and binds viral dsRNA and promotes activation of the NLRP6 inflammasome in intestinal epithelial cells to restrict infection by enteric viruses. The NLRP6 inflammasome acts by promoting maturation and secretion of IL18 in the extracellular milieu. Also involved in antibacterial innate immunity by promoting Wnt-induced antimicrobial protein expression in Paneth cells. In Mus musculus (Mouse), this protein is ATP-dependent RNA helicase DHX15.